Here is a 399-residue protein sequence, read N- to C-terminus: Leu/Ile/Val-binding protein homolog 7 (399 aa).

The first 22 residues, 1–22 (MEKHLIALSVAALLAGAAPASA), serve as a signal peptide directing secretion.

The protein belongs to the leucine-binding protein family.

Its function is as follows. Component of an amino-acid transport system. The polypeptide is Leu/Ile/Val-binding protein homolog 7 (Brucella suis biovar 1 (strain 1330)).